We begin with the raw amino-acid sequence, 282 residues long: MIPWNAYVRLLRLNKPIGILLLWYPTAWALWMANQGFPSIDLLMIFLFGTVFMRSAGCVINDIADRHIDRHVARTQFRPLTSGEVSLSEAFILLFILLCASLLLLLKLPINCFYFAVISVLITFLYPFCKRFLNAPQLILGLAFSMGIPMAFIASGKNLNSDFIVLFLINFSWIIAYDTMYAMTDKADDLKIGVKSTAIYFASYDRLIIALLLIFLHSLWLVWAINKNAEWFFYLLWCTAAGILTYQLKLIYARIPKNCFKAFLVSGYYGLVMWFAVGLALI.

9 helical membrane passes run 17–37, 40–60, 90–110, 113–133, 135–155, 163–183, 207–227, 231–251, and 262–282; these read IGIL…NQGF, IDLL…GCVI, AFIL…KLPI, FYFA…KRFL, APQL…FIAS, FIVL…MYAM, LIIA…AINK, WFFY…LKLI, and AFLV…LALI.

Belongs to the UbiA prenyltransferase family. Requires Mg(2+) as cofactor.

The protein resides in the cell inner membrane. It carries out the reaction all-trans-octaprenyl diphosphate + 4-hydroxybenzoate = 4-hydroxy-3-(all-trans-octaprenyl)benzoate + diphosphate. It participates in cofactor biosynthesis; ubiquinone biosynthesis. Catalyzes the prenylation of para-hydroxybenzoate (PHB) with an all-trans polyprenyl group. Mediates the second step in the final reaction sequence of ubiquinone-8 (UQ-8) biosynthesis, which is the condensation of the polyisoprenoid side chain with PHB, generating the first membrane-bound Q intermediate 3-octaprenyl-4-hydroxybenzoate. This is 4-hydroxybenzoate octaprenyltransferase from Legionella pneumophila (strain Corby).